The primary structure comprises 481 residues: Glutamate--tRNA ligase 2 (481 aa).

The 'HIGH' region motif lies at 17–27; the sequence is PSPTGFLHIGG. Positions 118–139 are enriched in basic and acidic residues; sequence AEQRAKKQPQRYDGRWRDRDPS. Residues 118-143 are disordered; the sequence is AEQRAKKQPQRYDGRWRDRDPSEAPA. The 'KMSKS' region motif lies at 246–250; the sequence is KLSKR. Residue Lys-249 participates in ATP binding.

It belongs to the class-I aminoacyl-tRNA synthetase family. Glutamate--tRNA ligase type 1 subfamily. In terms of assembly, monomer.

It localises to the cytoplasm. It carries out the reaction tRNA(Glu) + L-glutamate + ATP = L-glutamyl-tRNA(Glu) + AMP + diphosphate. In terms of biological role, catalyzes the attachment of glutamate to tRNA(Glu) in a two-step reaction: glutamate is first activated by ATP to form Glu-AMP and then transferred to the acceptor end of tRNA(Glu). This is Glutamate--tRNA ligase 2 from Zymomonas mobilis subsp. mobilis (strain ATCC 31821 / ZM4 / CP4).